Consider the following 103-residue polypeptide: Acylphosphatase-2 (103 aa).

S2 carries the N-acetylserine modification. One can recognise an Acylphosphatase-like domain in the interval 13–103 (SVDYEVFGRV…LDFSGFSTRY (91 aa)). Active-site residues include R28 and N46.

It belongs to the acylphosphatase family.

The catalysed reaction is an acyl phosphate + H2O = a carboxylate + phosphate + H(+). Its function is as follows. Its physiological role is not yet clear. The protein is Acylphosphatase-2 (ACYP2) of Gallus gallus (Chicken).